We begin with the raw amino-acid sequence, 370 residues long: Anhydro-N-acetylmuramic acid kinase (370 aa).

13–20 (GTSMDGVD) lines the ATP pocket.

The protein belongs to the anhydro-N-acetylmuramic acid kinase family.

It carries out the reaction 1,6-anhydro-N-acetyl-beta-muramate + ATP + H2O = N-acetyl-D-muramate 6-phosphate + ADP + H(+). It functions in the pathway amino-sugar metabolism; 1,6-anhydro-N-acetylmuramate degradation. The protein operates within cell wall biogenesis; peptidoglycan recycling. In terms of biological role, catalyzes the specific phosphorylation of 1,6-anhydro-N-acetylmuramic acid (anhMurNAc) with the simultaneous cleavage of the 1,6-anhydro ring, generating MurNAc-6-P. Is required for the utilization of anhMurNAc either imported from the medium or derived from its own cell wall murein, and thus plays a role in cell wall recycling. The sequence is that of Anhydro-N-acetylmuramic acid kinase from Vibrio vulnificus (strain YJ016).